The following is a 158-amino-acid chain: uncharacterized protein (158 aa).

Helical transmembrane passes span Gly-45–Ile-65, Leu-76–Trp-96, and Phe-106–Leu-126.

It to U.parvum UU007, UU041 and UU042.

It localises to the cell membrane. This is an uncharacterized protein from Ureaplasma parvum serovar 3 (strain ATCC 700970).